The primary structure comprises 251 residues: Phosphate import ATP-binding protein PstB 2 (251 aa).

The 242-residue stretch at 5 to 246 folds into the ABC transporter domain; that stretch reads ITTKDVHLYY…PDKEQTADYL (242 aa). 37–44 contributes to the ATP binding site; sequence GPSGCGKS.

Belongs to the ABC transporter superfamily. Phosphate importer (TC 3.A.1.7) family. In terms of assembly, the complex is composed of two ATP-binding proteins (PstB), two transmembrane proteins (PstC and PstA) and a solute-binding protein (PstS).

The protein resides in the cell membrane. The enzyme catalyses phosphate(out) + ATP + H2O = ADP + 2 phosphate(in) + H(+). In terms of biological role, part of the ABC transporter complex PstSACB involved in phosphate import. Responsible for energy coupling to the transport system. In Ligilactobacillus salivarius (strain UCC118) (Lactobacillus salivarius), this protein is Phosphate import ATP-binding protein PstB 2.